The chain runs to 415 residues: Fructose-like permease IIC component (415 aa).

The Cytoplasmic portion of the chain corresponds to 1-46 (MAIKKRSATVVPGASGAAAAVKNLQASKSSFWGELPQHVMSGISRM). Residues 35 to 415 (LPQHVMSGIS…RKGKLLIDSL (381 aa)) form the PTS EIIC type-2 domain. Residues 47-67 (VPTLIMGGVILAFSQLIAYSW) traverse the membrane as a helical segment. Topologically, residues 68 to 101 (LKIPAEIGIMDALNSGKFSGFDLSLLKFAWLSQS) are periplasmic. A helical membrane pass occupies residues 102–122 (FGGVLFGFAIPMFAAFVANSI). Over 123 to 126 (GGKL) the chain is Cytoplasmic. Residues 127–147 (AFPAGFIGGLMSTQPTQLLNF) form a helical membrane-spanning segment. Topologically, residues 148-157 (DPSTMQWATS) are periplasmic. Residues 158-178 (SPVPSTFIGALIISIVAGYLV) traverse the membrane as a helical segment. Residues 179 to 197 (KWMNQKIQLPDFLLAFKTT) lie on the Cytoplasmic side of the membrane. A helical membrane pass occupies residues 198–218 (FLLPILSAIFVMLAMYYVITP). The Periplasmic segment spans residues 219–237 (FGGWINGGIRTVLTAAGEK). Residues 238–258 (GALMYAMGIAAATAIDLGGPI) traverse the membrane as a helical segment. At 259-276 (NKAAGFVAFSFTTDHVLP) the chain is on the cytoplasmic side. Residues 277–297 (VTARSIAIVIPPIGLGLATII) traverse the membrane as a helical segment. At 298-318 (DRRLTGKRLFNAQLYPQGKTA) the chain is on the periplasmic side. The helical transmembrane segment at 319–339 (MFLAFMGISEGAIPFALESPI) threads the bilayer. Topologically, residues 340 to 341 (TA) are cytoplasmic. A helical transmembrane segment spans residues 342–362 (IPSYMVGAIVGSTAAVWLGAV). The Periplasmic segment spans residues 363–378 (QWFPESAIWAWPLVTN). A helical membrane pass occupies residues 379 to 399 (LGVYMAGIALGAIITALMVVF). Residues 400 to 415 (LRLMMFRKGKLLIDSL) lie on the Cytoplasmic side of the membrane.

The protein localises to the cell inner membrane. The phosphoenolpyruvate-dependent sugar phosphotransferase system (PTS), a major carbohydrate active -transport system, catalyzes the phosphorylation of incoming sugar substrates concomitant with their translocation across the cell membrane. The sequence is that of Fructose-like permease IIC component (fryC) from Shigella flexneri.